Here is a 566-residue protein sequence, read N- to C-terminus: Macrophage colony-stimulating factor 1 (566 aa).

The N-terminal stretch at 1-32 (MTARGAAGRCPSSTWMGSRLLLVCLLVSRSVA) is a signal peptide. The Extracellular portion of the chain corresponds to 33–508 (EVSEHCSHMI…SSIQDPQTSA (476 aa)). 3 N-linked (GlcNAc...) asparagine glycosylation sites follow: asparagine 106, asparagine 153, and asparagine 171. Disordered regions lie at residues 197-417 (PSSD…KLLP) and 434-484 (GKKS…GAAR). The segment covering 253-265 (PRSTCQTLESTEQ) has biased composition (polar residues). A glycan (O-linked (Xyl...) (chondroitin sulfate) serine) is linked at serine 302. Positions 348 to 360 (DQQPTNITDTPLT) are enriched in polar residues. The N-linked (GlcNAc...) asparagine glycan is linked to asparagine 353. 2 O-linked (GalNAc...) threonine glycosylation sites follow: threonine 355 and threonine 357. Residues 377–394 (EKTDGSSTLREDQQEPRS) show a composition bias toward basic and acidic residues. The span at 400–410 (LNPQRVGNSAT) shows a compositional bias: polar residues. A compositionally biased stretch (basic and acidic residues) spans 434 to 445 (GKKSTRDRRSPA). A helical membrane pass occupies residues 509–531 (FVFWVLGIILVLLAVGGLLFYSW). The Cytoplasmic portion of the chain corresponds to 532–566 (KRRSHRDPRTLDSSVGRPEGSSLAQDEDRQVELPV). The tract at residues 538 to 566 (DPRTLDSSVGRPEGSSLAQDEDRQVELPV) is disordered. The span at 557-566 (DEDRQVELPV) shows a compositional bias: basic and acidic residues.

As to quaternary structure, homodimer or heterodimer; disulfide-linked. Likely to exist in multiple forms: homodimer consisting of 2 identical 150-200 kDa proteoglycan subunits, heterodimer consisting of a 150-200 kDa proteoglycan subunit and a truncated 43 kDa subunit, and a homodimer consisting of 2 identical 43 kDa subunits. Interacts with CSF1R. In terms of processing, N-glycosylated. O-glycosylated; contains chondroitin sulfate.

It is found in the cell membrane. The protein resides in the secreted. The protein localises to the extracellular space. In terms of biological role, cytokine that plays an essential role in the regulation of survival, proliferation and differentiation of hematopoietic precursor cells, especially mononuclear phagocytes, such as macrophages and monocytes. Promotes the release of pro-inflammatory chemokines, and thereby plays an important role in innate immunity and in inflammatory processes. Plays an important role in the regulation of osteoclast proliferation and differentiation, the regulation of bone resorption, and is required for normal bone development. Required for normal male and female fertility. Promotes reorganization of the actin cytoskeleton, regulates formation of membrane ruffles, cell adhesion and cell migration. Plays a role in lipoprotein clearance. The polypeptide is Macrophage colony-stimulating factor 1 (Csf1) (Rattus norvegicus (Rat)).